The following is a 103-amino-acid chain: Mitochondrial import inner membrane translocase subunit Tim10 B (103 aa).

The Twin CX3C motif motif lies at 28-52 (CFQRCVPSLHHRALDAEEEACLHSC). Intrachain disulfides connect Cys28/Cys52 and Cys32/Cys48.

The protein belongs to the small Tim family. Component of the TIM22 complex, which core is composed of TIMM22, associated with TIMM10 (TIMM10A and/or TIMM10B), TIMM9, AGK and TIMM29. As to expression, ubiquitous, with highest expression in heart, kidney, liver and skeletal muscle.

It is found in the mitochondrion inner membrane. Its function is as follows. Component of the TIM22 complex, a complex that mediates the import and insertion of multi-pass transmembrane proteins into the mitochondrial inner membrane. The TIM22 complex forms a twin-pore translocase that uses the membrane potential as the external driving force. In the TIM22 complex, it may act as a docking point for the soluble 70 kDa complex that guides the target proteins in transit through the aqueous mitochondrial intermembrane space. This chain is Mitochondrial import inner membrane translocase subunit Tim10 B (TIMM10B), found in Homo sapiens (Human).